A 588-amino-acid chain; its full sequence is Aspartate--tRNA ligase (588 aa).

Glu177 provides a ligand contact to L-aspartate. The segment at 201–204 is aspartate; that stretch reads QLFK. Arg223 contributes to the L-aspartate binding site. ATP is bound by residues 223–225 and Gln232; that span reads RDE. His451 is a binding site for L-aspartate. Glu485 serves as a coordination point for ATP. Arg492 lines the L-aspartate pocket. 537–540 contributes to the ATP binding site; sequence GLDR.

It belongs to the class-II aminoacyl-tRNA synthetase family. Type 1 subfamily. As to quaternary structure, homodimer.

The protein resides in the cytoplasm. It carries out the reaction tRNA(Asp) + L-aspartate + ATP = L-aspartyl-tRNA(Asp) + AMP + diphosphate. Catalyzes the attachment of L-aspartate to tRNA(Asp) in a two-step reaction: L-aspartate is first activated by ATP to form Asp-AMP and then transferred to the acceptor end of tRNA(Asp). This Staphylococcus epidermidis (strain ATCC 35984 / DSM 28319 / BCRC 17069 / CCUG 31568 / BM 3577 / RP62A) protein is Aspartate--tRNA ligase.